The chain runs to 120 residues: NAD(P)H-quinone oxidoreductase subunit 3, chloroplastic (120 aa).

The next 3 membrane-spanning stretches (helical) occupy residues 9–29 (IFWAFLIISSLIPILAFFISG), 64–84 (MFALVFVVFDVETVFLYPWAM), and 88–108 (VLGVSVFIEALIFVLILIVGL).

Belongs to the complex I subunit 3 family. In terms of assembly, NDH is composed of at least 16 different subunits, 5 of which are encoded in the nucleus.

It is found in the plastid. Its subcellular location is the chloroplast thylakoid membrane. It carries out the reaction a plastoquinone + NADH + (n+1) H(+)(in) = a plastoquinol + NAD(+) + n H(+)(out). It catalyses the reaction a plastoquinone + NADPH + (n+1) H(+)(in) = a plastoquinol + NADP(+) + n H(+)(out). In terms of biological role, NDH shuttles electrons from NAD(P)H:plastoquinone, via FMN and iron-sulfur (Fe-S) centers, to quinones in the photosynthetic chain and possibly in a chloroplast respiratory chain. The immediate electron acceptor for the enzyme in this species is believed to be plastoquinone. Couples the redox reaction to proton translocation, and thus conserves the redox energy in a proton gradient. The chain is NAD(P)H-quinone oxidoreductase subunit 3, chloroplastic from Panax ginseng (Korean ginseng).